Reading from the N-terminus, the 231-residue chain is Albumin-2 (231 aa).

4 Hemopexin repeats span residues 4 to 55 (TGYI…FKSL), 62 to 112 (SYGV…FPFF), 118 to 166 (ENGI…FPCF), and 172 to 223 (ESGT…WPSL). Ca(2+) contacts are provided by Asn8, Asp66, Asp122, and Asp176.

As to quaternary structure, monomer and homodimer.

The protein localises to the cytoplasm. It localises to the cytosol. Functionally, may play a role in response to oxidative stress and polyamine biosynthesis. This Pisum sativum (Garden pea) protein is Albumin-2.